We begin with the raw amino-acid sequence, 193 residues long: Superoxide dismutase [Fe] (193 aa).

Fe cation-binding residues include His27, His74, Asp157, and His161.

This sequence belongs to the iron/manganese superoxide dismutase family. As to quaternary structure, monomer. It depends on Fe cation as a cofactor.

The enzyme catalyses 2 superoxide + 2 H(+) = H2O2 + O2. Destroys superoxide anion radicals which are normally produced within the cells and which are toxic to biological systems. Involved in the metabolism of 4-aminophenol. May have an indirect role in hydroxyquinol metabolism by scavenging and detoxifying reactive species that promote its auto-oxidation. The chain is Superoxide dismutase [Fe] from Burkholderia sp.